Reading from the N-terminus, the 146-residue chain is Mitochondrial import receptor subunit TOM20 homolog B (146 aa).

Over 1–5 (MMGGS) the chain is Mitochondrial intermembrane. A helical membrane pass occupies residues 6–25 (SSRIAAGLGAALFVGYCIYF). Residues 26–146 (DRKRRSDPNY…AQSISDDDIE (121 aa)) lie on the Cytoplasmic side of the membrane. Residues 37-47 (NKLRERRKKQK) are compositionally biased toward basic residues. Positions 37–56 (NKLRERRKKQKAAQEKAGLS) are disordered. Residue Ser141 is modified to Phosphoserine.

The protein belongs to the Tom20 family. As to quaternary structure, forms part of the preprotein translocase complex of the outer mitochondrial membrane (TOM complex). Interacts with tom22.

The protein resides in the mitochondrion outer membrane. Its function is as follows. Central component of the receptor complex responsible for the recognition and translocation of cytosolically synthesized mitochondrial preproteins. Together with tom22 functions as the transit peptide receptor at the surface of the mitochondrion outer membrane and facilitates the movement of preproteins into the tom40 translocation pore. In Danio rerio (Zebrafish), this protein is Mitochondrial import receptor subunit TOM20 homolog B (tomm20b).